Here is a 409-residue protein sequence, read N- to C-terminus: MDKLLERFLHYVSLDTQSKSGVRQVPSTEGQWKLLRLLKQQLEEMGLVNITLSEKGTLMATLPANVEGDIPAIGFISHVDTSPDFSGKNVNPQIVENYRGGDIALGIGDEVLSPVMFPVLHQLLGQTLITTDGKTLLGADDKAGVAEIMTALAVLKGNPIPHGEIKVAFTPDEEVGKGAKHFDVEAFGAQWAYTVDGGGVGELEFENFNAASVNIKIVGNNVHPGTAKGVMVNALSLAARIHAEVPADEAPETTEGYEGFYHLASMKGTVDRAEMHYIIRDFDRKQFEARKRKMMEIAKKVGKGLHPDCYIELVIEDSYYNMREKVVEHPHILDIAQQAMRDCHITPEMKPIRGGTDGAQLSFMGLPCPNLFTGGYNYHGKHEFVTLEGMEKAVQVIVRIAELTAKRGQ.

His78 contacts Zn(2+). Residue Asp80 is part of the active site. Asp140 provides a ligand contact to Zn(2+). Glu173 acts as the Proton acceptor in catalysis. Zn(2+) contacts are provided by Glu174, Asp196, and His379.

The protein belongs to the peptidase M20B family. It depends on Zn(2+) as a cofactor.

It localises to the cytoplasm. The catalysed reaction is Release of the N-terminal residue from a tripeptide.. In terms of biological role, cleaves the N-terminal amino acid of tripeptides. This is Peptidase T from Salmonella choleraesuis (strain SC-B67).